The following is a 100-amino-acid chain: Aspartyl/glutamyl-tRNA(Asn/Gln) amidotransferase subunit C (100 aa).

The protein belongs to the GatC family. In terms of assembly, heterotrimer of A, B and C subunits.

The enzyme catalyses L-glutamyl-tRNA(Gln) + L-glutamine + ATP + H2O = L-glutaminyl-tRNA(Gln) + L-glutamate + ADP + phosphate + H(+). It catalyses the reaction L-aspartyl-tRNA(Asn) + L-glutamine + ATP + H2O = L-asparaginyl-tRNA(Asn) + L-glutamate + ADP + phosphate + 2 H(+). Allows the formation of correctly charged Asn-tRNA(Asn) or Gln-tRNA(Gln) through the transamidation of misacylated Asp-tRNA(Asn) or Glu-tRNA(Gln) in organisms which lack either or both of asparaginyl-tRNA or glutaminyl-tRNA synthetases. The reaction takes place in the presence of glutamine and ATP through an activated phospho-Asp-tRNA(Asn) or phospho-Glu-tRNA(Gln). This Staphylococcus aureus (strain Newman) protein is Aspartyl/glutamyl-tRNA(Asn/Gln) amidotransferase subunit C.